Consider the following 101-residue polypeptide: Small ribosomal subunit protein uS14 (101 aa).

The segment at 1-26 (MAKVSSIKKNESRKKKSQSLHNKRSA) is disordered. The span at 11–26 (ESRKKKSQSLHNKRSA) shows a compositional bias: basic residues.

The protein belongs to the universal ribosomal protein uS14 family. As to quaternary structure, part of the 30S ribosomal subunit. Contacts proteins S3 and S10.

Functionally, binds 16S rRNA, required for the assembly of 30S particles and may also be responsible for determining the conformation of the 16S rRNA at the A site. This Rickettsia felis (strain ATCC VR-1525 / URRWXCal2) (Rickettsia azadi) protein is Small ribosomal subunit protein uS14.